Reading from the N-terminus, the 234-residue chain is Isoprenyl transferase (234 aa).

Residue Asp-13 is part of the active site. Position 13 (Asp-13) interacts with Mg(2+). Residues 14 to 17, Trp-18, Arg-26, His-30, and 58 to 60 contribute to the substrate site; these read GNGR and STE. Asn-61 acts as the Proton acceptor in catalysis. Substrate contacts are provided by residues Trp-62, Arg-64, Arg-180, and 186–188; that span reads RLS. Glu-199 provides a ligand contact to Mg(2+).

Belongs to the UPP synthase family. In terms of assembly, homodimer. The cofactor is Mg(2+).

Catalyzes the condensation of isopentenyl diphosphate (IPP) with allylic pyrophosphates generating different type of terpenoids. The chain is Isoprenyl transferase from Helicobacter pylori (strain J99 / ATCC 700824) (Campylobacter pylori J99).